A 288-amino-acid polypeptide reads, in one-letter code: N-acetyltransferase ECO1 (288 aa).

The tract at residues 1-50 is disordered; that stretch reads MKRDITQLLSPELSQSSSRNDKKRKPTNSNKKVQTVLNFPSSSPNASQST. Positions 7–18 are enriched in low complexity; it reads QLLSPELSQSSS. The span at 27 to 50 shows a compositional bias: polar residues; it reads TNSNKKVQTVLNFPSSSPNASQST. The segment at 50–74 adopts a CCHH-type zinc-finger fold; the sequence is TTCPTCGMTYYSHVSKDNDVHNKYH.

Belongs to the acetyltransferase family. ECO subfamily.

The protein resides in the nucleus. Probable acetyltransferase required for the establishment of sister chromatid cohesion and couple the processes of cohesion and DNA replication to ensure that only sister chromatids become paired together. In contrast to the structural cohesins, the deposition and establishment factors are required only during S phase. Acts by acetylating the cohesin complex component SMC3. The chain is N-acetyltransferase ECO1 (ECO1) from Debaryomyces hansenii (strain ATCC 36239 / CBS 767 / BCRC 21394 / JCM 1990 / NBRC 0083 / IGC 2968) (Yeast).